Consider the following 118-residue polypeptide: Large ribosomal subunit protein uL22 (118 aa).

It belongs to the universal ribosomal protein uL22 family. Part of the 50S ribosomal subunit.

This protein binds specifically to 23S rRNA; its binding is stimulated by other ribosomal proteins, e.g. L4, L17, and L20. It is important during the early stages of 50S assembly. It makes multiple contacts with different domains of the 23S rRNA in the assembled 50S subunit and ribosome. Functionally, the globular domain of the protein is located near the polypeptide exit tunnel on the outside of the subunit, while an extended beta-hairpin is found that lines the wall of the exit tunnel in the center of the 70S ribosome. The protein is Large ribosomal subunit protein uL22 of Chlorobium limicola (strain DSM 245 / NBRC 103803 / 6330).